The following is a 127-amino-acid chain: Holo-[acyl-carrier-protein] synthase (127 aa).

2 residues coordinate Mg(2+): Asp-7 and Glu-53.

This sequence belongs to the P-Pant transferase superfamily. AcpS family. The cofactor is Mg(2+).

Its subcellular location is the cytoplasm. The catalysed reaction is apo-[ACP] + CoA = holo-[ACP] + adenosine 3',5'-bisphosphate + H(+). In terms of biological role, transfers the 4'-phosphopantetheine moiety from coenzyme A to a Ser of acyl-carrier-protein. This chain is Holo-[acyl-carrier-protein] synthase, found in Herpetosiphon aurantiacus (strain ATCC 23779 / DSM 785 / 114-95).